We begin with the raw amino-acid sequence, 152 residues long: Histone H2B.9 (152 aa).

Basic and acidic residues-rich tracts occupy residues 1-16 (MAPKAEKKPAAKKPAE) and 34-52 (EKRLPAGKGEKGGAGEGKK). A disordered region spans residues 1–59 (MAPKAEKKPAAKKPAEEEPAAEKAPAAGKKPKAEKRLPAGKGEKGGAGEGKKAGRKKGK). Residues Lys-7 and Lys-35 each carry the N6-acetyllysine modification. Lys-148 is covalently cross-linked (Glycyl lysine isopeptide (Lys-Gly) (interchain with G-Cter in ubiquitin)).

Belongs to the histone H2B family. The nucleosome is a histone octamer containing two molecules each of H2A, H2B, H3 and H4 assembled in one H3-H4 heterotetramer and two H2A-H2B heterodimers. The octamer wraps approximately 147 bp of DNA. In terms of processing, can be acetylated to form H2BK6ac and H2BK33ac. Monoubiquitinated by BRE1 to form H2BK143ub1 and deubiquitinated by UBP26. Required for heterochromatic histone H3 di- and trimethylation at H3K4me. May give a specific tag for epigenetic transcriptional activation.

Its subcellular location is the nucleus. The protein localises to the chromosome. Its function is as follows. Core component of nucleosome. Nucleosomes wrap and compact DNA into chromatin, limiting DNA accessibility to the cellular machineries which require DNA as a template. Histones thereby play a central role in transcription regulation, DNA repair, DNA replication and chromosomal stability. DNA accessibility is regulated via a complex set of post-translational modifications of histones, also called histone code, and nucleosome remodeling. The polypeptide is Histone H2B.9 (H2B.9) (Oryza sativa subsp. indica (Rice)).